The primary structure comprises 67 residues: Probable pilin MJ1400 (67 aa).

Residues M1–G13 constitute a propeptide that is removed on maturation. The QXSXEXXXL signature appears at Q14–L22.

Post-translationally, the N-terminus is cleaved by the prepilin peptidase EppA, which recognizes the class III signal sequence.

Its subcellular location is the secreted. It localises to the cell surface. The protein localises to the fimbrium. The sequence is that of Probable pilin MJ1400 from Methanocaldococcus jannaschii (strain ATCC 43067 / DSM 2661 / JAL-1 / JCM 10045 / NBRC 100440) (Methanococcus jannaschii).